A 189-amino-acid polypeptide reads, in one-letter code: Chitin synthase 1 (189 aa).

The protein belongs to the chitin synthase family. Class I subfamily.

Its subcellular location is the cell membrane. It catalyses the reaction [(1-&gt;4)-N-acetyl-beta-D-glucosaminyl](n) + UDP-N-acetyl-alpha-D-glucosamine = [(1-&gt;4)-N-acetyl-beta-D-glucosaminyl](n+1) + UDP + H(+). Its function is as follows. Polymerizes chitin, a structural polymer of the cell wall and septum, by transferring the sugar moiety of UDP-GlcNAc to the non-reducing end of the growing chitin polymer. The polypeptide is Chitin synthase 1 (chs1) (Botryotinia fuckeliana (Noble rot fungus)).